The sequence spans 206 residues: Octanoyltransferase (206 aa).

The region spanning 30–206 (PETNDEIWLV…EFVTLLNNSI (177 aa)) is the BPL/LPL catalytic domain. Residues 69 to 76 (RGGQVTYH), 137 to 139 (SLG), and 150 to 152 (GIA) each bind substrate. C168 serves as the catalytic Acyl-thioester intermediate.

This sequence belongs to the LipB family.

The protein localises to the cytoplasm. It carries out the reaction octanoyl-[ACP] + L-lysyl-[protein] = N(6)-octanoyl-L-lysyl-[protein] + holo-[ACP] + H(+). It functions in the pathway protein modification; protein lipoylation via endogenous pathway; protein N(6)-(lipoyl)lysine from octanoyl-[acyl-carrier-protein]: step 1/2. Its function is as follows. Catalyzes the transfer of endogenously produced octanoic acid from octanoyl-acyl-carrier-protein onto the lipoyl domains of lipoate-dependent enzymes. Lipoyl-ACP can also act as a substrate although octanoyl-ACP is likely to be the physiological substrate. The protein is Octanoyltransferase of Francisella tularensis subsp. novicida (strain U112).